The chain runs to 693 residues: Glycine--tRNA ligase beta subunit (693 aa).

The protein belongs to the class-II aminoacyl-tRNA synthetase family. As to quaternary structure, tetramer of two alpha and two beta subunits.

The protein resides in the cytoplasm. It catalyses the reaction tRNA(Gly) + glycine + ATP = glycyl-tRNA(Gly) + AMP + diphosphate. The chain is Glycine--tRNA ligase beta subunit from Ligilactobacillus salivarius (strain UCC118) (Lactobacillus salivarius).